We begin with the raw amino-acid sequence, 492 residues long: Ferruginol synthase (492 aa).

The helical transmembrane segment at 1 to 21 (MDPFPLVAAALFIAATWFITF) threads the bilayer. Cys436 lines the heme pocket.

It belongs to the cytochrome P450 family. It depends on heme as a cofactor. In terms of tissue distribution, expressed in leaf glandular trichomes.

The protein localises to the membrane. It carries out the reaction abieta-8,11,13-triene + reduced [NADPH--hemoprotein reductase] + O2 = ferruginol + oxidized [NADPH--hemoprotein reductase] + H2O + H(+). The catalysed reaction is ferruginol + reduced [NADPH--hemoprotein reductase] + O2 = 11-hydroxyferruginol + oxidized [NADPH--hemoprotein reductase] + H2O + H(+). The enzyme catalyses miltiradiene + 2 reduced [NADPH--hemoprotein reductase] + 2 O2 = 11-oxomiltiradiene + 2 oxidized [NADPH--hemoprotein reductase] + 3 H2O + 2 H(+). Its pathway is secondary metabolite biosynthesis; terpenoid biosynthesis. Monooxygenase involved in the biosynthesis of labdane-related diterpenes natural products. Catalyzes the oxidation of abietatriene to produce ferruginol. Catalyzes the oxidation of ferruginol at C-12 to produce 11-hydroxyferruginol. Ferruginol and 11-hydroxyferruginol are intermediates in the biosynthesis of carnosate, a potent antioxidant. May also convert miltiradiene into 11-oxomiltiradiene. The sequence is that of Ferruginol synthase from Salvia fruticosa (Greek sage).